Reading from the N-terminus, the 470-residue chain is Iron-sulfur cluster assembly protein SufB (470 aa).

It belongs to the iron-sulfur cluster assembly SufBD family. As to quaternary structure, component of a complex composed of SufB, SufC and SufD in a stoichiometric ratio of 1:2:1. Interacts with SufC. Interacts with SufD.

It functions in the pathway cofactor biosynthesis; iron-sulfur cluster biosynthesis. In terms of biological role, participates in the sulfur mobilization (SUF) pathway for iron-sulfur (Fe-S) cluster biogenesis. As part of a complex consisting of SufB-SufC(2)-SufD, involved in assembly of [4Fe-4S] clusters. Exhibits ATPase activity. In Plasmodium falciparum (isolate 3D7), this protein is Iron-sulfur cluster assembly protein SufB.